The following is a 119-amino-acid chain: Non-specific lipid-transfer protein 3 (119 aa).

Positions 1 to 24 are cleaved as a signal peptide; the sequence is MARSMKLACVVLAMCMLVAPMAEA. 4 disulfides stabilise this stretch: C28-C77, C38-C54, C55-C100, and C75-C114.

This sequence belongs to the plant LTP family. Expressed in roots, stem, leaves and tendrils of the mature plant.

Its function is as follows. Plant non-specific lipid-transfer proteins transfer phospholipids as well as galactolipids across membranes. May play a role in wax or cutin deposition in the cell walls of expanding epidermal cells and certain secretory tissues. In Pisum sativum (Garden pea), this protein is Non-specific lipid-transfer protein 3.